A 1832-amino-acid chain; its full sequence is Putative transcription factor capicua (1832 aa).

Phosphoserine is present on residues S41 and S49. Disordered stretches follow at residues 66–121 (ANQS…EVGS), 135–227 (STVG…AHPH), 323–353 (QQQQQHQQLQQQQQLQQQQQSPPQMPLNHNN), 389–427 (NQRQKQQQEEPDDQLDDDVFETTTPGISANSKKQTAAMR), 444–493 (DGAA…IRRP), 563–619 (DRRK…GGQG), 690–739 (RERV…SGGE), 784–845 (QPTG…VSAP), 874–938 (PMHH…EDDE), 1069–1105 (TSTLSSSSSNPANNEAPNKFSNFPTQHQPTTTTTISC), 1151–1178 (GQDEEEEEDEGNAEKQENPKVAGKEQVT), 1457–1602 (DGGM…STAA), 1632–1668 (QPEDCQSPSAIAVPSSPRVYGTNYRKKNTAPPPVQKL), 1701–1733 (LESSDQTGRSPRTPKTPLQSARSDASEKGHRKV), and 1789–1817 (ASCTPHSAGPNTPSDSNSSSTTLSASSTS). Residues 96-121 (NANNNSSNNNTSSSNNNNNSNWEVGS) show a composition bias toward low complexity. Over residues 172 to 186 (PPPPPPASLPAPSAP) the composition is skewed to pro residues. Low complexity-rich tracts occupy residues 187 to 203 (PTSGSSSSHNSVGHATS), 211 to 223 (QQQHQQQQQHQQQ), and 323 to 342 (QQQQQHQQLQQQQQLQQQQQ). The span at 397 to 408 (EEPDDQLDDDVF) shows a compositional bias: acidic residues. A compositionally biased stretch (polar residues) spans 409 to 422 (ETTTPGISANSKKQ). Low complexity predominate over residues 446–484 (AAGAPATSAAKRRSQSLSALQQQQQQQQQAGAAGTAAGQ). Positions 490–558 (IRRPMNAFMI…AHFKLHPEWK (69 aa)) form a DNA-binding region, HMG box. The span at 610–619 (GGSGSCGGQG) shows a compositional bias: gly residues. Residues 834–1832 (GSASGGGVVS…TSAADVFQYY (999 aa)) form an interaction with gro region. Basic and acidic residues predominate over residues 903–914 (ESSEKDKPALDD). Over residues 915–938 (QERDEVEEEDEDEEDDDEDDEDDE) the composition is skewed to acidic residues. Over residues 1078 to 1091 (NPANNEAPNKFSNF) the composition is skewed to polar residues. Residues 1092–1105 (PTQHQPTTTTTISC) show a composition bias toward low complexity. Over residues 1462-1471 (GCASAAASGG) the composition is skewed to low complexity. Over residues 1503 to 1525 (LSQSKSESNVSFGANLGASNGQH) the composition is skewed to polar residues. Low complexity predominate over residues 1547-1589 (NSSNLSSALPTPTSSTTTPNSDEQLPLTPTTSSSNSNLNQQQP). The residue at position 1716 (T1716) is a Phosphothreonine. A compositionally biased stretch (basic and acidic residues) spans 1724–1733 (DASEKGHRKV). A compositionally biased stretch (polar residues) spans 1789-1799 (ASCTPHSAGPN). The span at 1800-1817 (TPSDSNSSSTTLSASSTS) shows a compositional bias: low complexity.

As to quaternary structure, interacts with gro. In terms of tissue distribution, expressed in the central region of embryos. Also expressed in ovarian follicle cells, the wing imaginal disks and the wing pouch.

The protein localises to the nucleus. Functionally, transcriptional repressor required for the specification of numerous cell types during embryonic development. Required for terminal patterning of early embryos. May associate with gro to repress tll and hkb, restricting their expression to embryonic terminal poles where they initiate correct development of head and tail structures. Required for dorsoventral patterning of oocytes and early embryos. Cooperates with dl to repress zen and other dorsal specific genes within the embryo and promotes expression of the ventralizing factor pip in ovarian follicle cells. Required during wing development for the specification of intervein areas, where it mediates localized repression of vein specific genes such as aos, dpp and vvl. The chain is Putative transcription factor capicua (cic) from Drosophila melanogaster (Fruit fly).